The following is a 97-amino-acid chain: Large ribosomal subunit protein bL28 (97 aa).

Belongs to the bacterial ribosomal protein bL28 family.

In Rhizorhabdus wittichii (strain DSM 6014 / CCUG 31198 / JCM 15750 / NBRC 105917 / EY 4224 / RW1) (Sphingomonas wittichii), this protein is Large ribosomal subunit protein bL28.